The primary structure comprises 224 residues: Ribonuclease T (224 aa).

Over residues 1–11 (MSEDLYEDDQD) the composition is skewed to acidic residues. A disordered region spans residues 1–20 (MSEDLYEDDQDSQVSSGSRH). In terms of domain architecture, Exonuclease spans 32–206 (VVVDVETGGF…YDTEKTAELF (175 aa)). 4 residues coordinate Mg(2+): Asp35, Glu37, His193, and Asp198. His193 (proton donor/acceptor) is an active-site residue.

The protein belongs to the RNase T family. In terms of assembly, homodimer. The cofactor is Mg(2+).

Its function is as follows. Trims short 3' overhangs of a variety of RNA species, leaving a one or two nucleotide 3' overhang. Responsible for the end-turnover of tRNA: specifically removes the terminal AMP residue from uncharged tRNA (tRNA-C-C-A). Also appears to be involved in tRNA biosynthesis. The protein is Ribonuclease T of Pseudomonas entomophila (strain L48).